The primary structure comprises 244 residues: Small ribosomal subunit protein eS4 (244 aa).

The region spanning 43-108 (LPLLLIVRDI…NYRVLFDRKG (66 aa)) is the S4 RNA-binding domain.

It belongs to the eukaryotic ribosomal protein eS4 family.

This is Small ribosomal subunit protein eS4 (rps4e) from Methanocaldococcus jannaschii (strain ATCC 43067 / DSM 2661 / JAL-1 / JCM 10045 / NBRC 100440) (Methanococcus jannaschii).